A 326-amino-acid polypeptide reads, in one-letter code: DNA-directed RNA polymerase subunit alpha (326 aa).

Positions 1 to 231 (MQTALLKPKI…DQLSVFAALE (231 aa)) are alpha N-terminal domain (alpha-NTD). The segment at 247 to 326 (IDPILLRPVD…ENWPPAGLEK (80 aa)) is alpha C-terminal domain (alpha-CTD).

Belongs to the RNA polymerase alpha chain family. As to quaternary structure, homodimer. The RNAP catalytic core consists of 2 alpha, 1 beta, 1 beta' and 1 omega subunit. When a sigma factor is associated with the core the holoenzyme is formed, which can initiate transcription.

The catalysed reaction is RNA(n) + a ribonucleoside 5'-triphosphate = RNA(n+1) + diphosphate. Its function is as follows. DNA-dependent RNA polymerase catalyzes the transcription of DNA into RNA using the four ribonucleoside triphosphates as substrates. The protein is DNA-directed RNA polymerase subunit alpha of Ralstonia nicotianae (strain ATCC BAA-1114 / GMI1000) (Ralstonia solanacearum).